A 408-amino-acid polypeptide reads, in one-letter code: MEVLEEDLTCPICCSLFDDPRVLPCSHNFCKKCLDGVLEENSRTMQWRPSSFKCPTCRKETPTMGVNGLQVNYLLKGIVEKYNKIKVSPKMPVCKEHSDQPLNIFCSTDLKLICGSCATTGEHKKHVFSSIGDAYIQEKSSLETLFQGVEEWNSKEVHSHLDTLESNKRKALHSLAKESDKVKAYFEKLQYLLEQKKNEILSDFETLKLAVMQAYDTEINKLHTVLSEQRKACNIVEDLKNISDPFMFLQQMQEFRDKMTFIKEAPLTTGQDVNVNPAMKEFDTSMWDSIKLGEVDKLSLPQDTTSKKEPGDAKTLHSLKPILVVACLILLLVTFLCAYPFIDSLPTFTIDLQVISSYFFTTTAKAANLTILFWEQLSEELLILKQRCQTYVSVFLENVAEFVCKYKL.

The RING-type zinc-finger motif lies at 10–58; sequence CPICCSLFDDPRVLPCSHNFCKKCLDGVLEENSRTMQWRPSSFKCPTCR. The B box-type zinc finger occupies 89-131; the sequence is PKMPVCKEHSDQPLNIFCSTDLKLICGSCATTGEHKKHVFSSI. 4 residues coordinate Zn(2+): Cys94, His97, Cys117, and His123. Residues 322–342 form a helical membrane-spanning segment; sequence ILVVACLILLLVTFLCAYPFI.

It is found in the endoplasmic reticulum membrane. It functions in the pathway protein modification; protein ubiquitination. E3 ubiquitin ligase involved in the retrotranslocation and turnover of membrane and secretory proteins from the ER through a set of processes named ER-associated degradation (ERAD). This process acts on misfolded proteins as well as in the regulated degradation of correctly folded proteins. This chain is Tripartite motif containing 13 (trim13), found in Xenopus tropicalis (Western clawed frog).